Reading from the N-terminus, the 174-residue chain is Protein GrpE (174 aa).

Positions 1-35 (MAQDIKNEEVEEVQEEEVVETAEETTPEKSELDLA) are disordered. Over residues 9 to 25 (EVEEVQEEEVVETAEET) the composition is skewed to acidic residues. Residues 26–35 (TPEKSELDLA) are compositionally biased toward basic and acidic residues.

The protein belongs to the GrpE family. Homodimer.

Its subcellular location is the cytoplasm. Functionally, participates actively in the response to hyperosmotic and heat shock by preventing the aggregation of stress-denatured proteins, in association with DnaK and GrpE. It is the nucleotide exchange factor for DnaK and may function as a thermosensor. Unfolded proteins bind initially to DnaJ; upon interaction with the DnaJ-bound protein, DnaK hydrolyzes its bound ATP, resulting in the formation of a stable complex. GrpE releases ADP from DnaK; ATP binding to DnaK triggers the release of the substrate protein, thus completing the reaction cycle. Several rounds of ATP-dependent interactions between DnaJ, DnaK and GrpE are required for fully efficient folding. The chain is Protein GrpE from Streptococcus pneumoniae (strain ATCC BAA-255 / R6).